Here is a 552-residue protein sequence, read N- to C-terminus: uncharacterized protein (552 aa).

29–36 (GENAWGKS) serves as a coordination point for ATP. The region spanning 379–469 (RCWLLVEGET…AEREHLTALP (91 aa)) is the Toprim domain.

This is an uncharacterized protein from Escherichia coli (strain K12).